A 40-amino-acid chain; its full sequence is uncharacterized protein (40 aa).

This is an uncharacterized protein from Acheta domesticus (House cricket).